The following is a 278-amino-acid chain: Ferredoxin--NADP reductase A (278 aa).

An FAD-binding FR-type domain is found at 3-103 (PGYTEETVLE…KRATGTLTIG (101 aa)). FAD-binding positions include 52 to 55 (RAYS) and T118.

Belongs to the ferredoxin--NADP reductase type 1 family. Requires FAD as cofactor.

It carries out the reaction 2 reduced [4Fe-4S]-[ferredoxin] + NADP(+) + H(+) = 2 oxidized [4Fe-4S]-[ferredoxin] + NADPH. Its function is as follows. Transports electrons between NADPH and ferredoxin. Can transfer electrons to ferredoxins Fdx2 and Fdx8. Prefers NADPH to NADH. This is Ferredoxin--NADP reductase A from Sorangium cellulosum (strain So ce56) (Polyangium cellulosum (strain So ce56)).